Here is a 153-residue protein sequence, read N- to C-terminus: DNA gyrase inhibitor 1 (153 aa).

This sequence belongs to the DNA gyrase inhibitor family. In terms of assembly, interacts with DNA gyrase.

The protein resides in the cytoplasm. In terms of biological role, inhibits the supercoiling activity of DNA gyrase. Acts by inhibiting DNA gyrase at an early step, prior to (or at the step of) binding of DNA by the gyrase. It protects cells against toxins that target DNA gyrase, by inhibiting activity of these toxins and reducing the formation of lethal double-strand breaks in the cell. The protein is DNA gyrase inhibitor 1 of Dickeya dadantii (strain 3937) (Erwinia chrysanthemi (strain 3937)).